Consider the following 469-residue polypeptide: Argininosuccinate lyase (469 aa).

This sequence belongs to the lyase 1 family. Argininosuccinate lyase subfamily.

Its subcellular location is the cytoplasm. The catalysed reaction is 2-(N(omega)-L-arginino)succinate = fumarate + L-arginine. The protein operates within amino-acid biosynthesis; L-arginine biosynthesis; L-arginine from L-ornithine and carbamoyl phosphate: step 3/3. The chain is Argininosuccinate lyase from Burkholderia vietnamiensis (strain G4 / LMG 22486) (Burkholderia cepacia (strain R1808)).